The sequence spans 757 residues: 17S U2 SnRNP complex component HTATSF1 (757 aa).

Disordered regions lie at residues 1–54 (MSGN…YEWD) and 80–123 (SDGA…KAES). The residue at position 2 (S2) is an N-acetylserine. The segment covering 80–94 (SDGASSSTANVQDAN) has biased composition (polar residues). The span at 97–123 (AVEEPPQKEVPETPDSKRKGEKRKAES) shows a compositional bias: basic and acidic residues. RRM domains are found at residues 134–219 (TNVY…VAKF) and 265–350 (RVVI…AWDG). Residues 260 to 354 (RLRHERVVIL…AQAWDGTTDY (95 aa)) form a U2AF homology motif (UHM) region. N6-acetyllysine is present on K298. The mediates interaction with the P-TEFb complex stretch occupies residues 382–757 (GLRRMDSIAG…SSSDDDDDEV (376 aa)). The segment at 383–417 (LRRMDSIAGSERPGPSRMRHFSEHPSMSNMKAQEA) is disordered. 4 positions are modified to phosphoserine: S388, S404, S408, and S410. The segment covering 407–417 (PSMSNMKAQEA) has biased composition (polar residues). A Glycyl lysine isopeptide (Lys-Gly) (interchain with G-Cter in SUMO2) cross-link involves residue K431. The tract at residues 432-757 (FEKAEEGGES…SSSDDDDDEV (326 aa)) is disordered. Residues S441, S446, S519, and S528 each carry the phosphoserine modification. Composition is skewed to basic and acidic residues over residues 445–483 (ASEKDAKEGGSDGDHPEREGGEGCSKKENEEGCPERALE) and 497–538 (GPER…KKES). Over residues 539-551 (EDDDSEEESEEDS) the composition is skewed to acidic residues. Composition is skewed to basic and acidic residues over residues 552-585 (SEKQSQDGSDKEIEENGVKKDVDQDVSDKEFPED) and 595-609 (TDKSEFDEGSERVLD). Phosphoserine is present on residues S556, S560, S578, S598, S604, S613, S621, S645, S679, S705, S724, and S749. 3 stretches are compositionally biased toward acidic residues: residues 610-635 (EEGSEREFEEDSDEKEEEGDDDEEEV), 643-671 (DDSDDIEEEEEADEKECEDADDKEEDNDI), and 678-688 (DSDEKEDEEDT). Composition is skewed to basic and acidic residues over residues 689 to 709 (DGKKDDDASDKVFEDNSNEKL) and 716 to 737 (PNEKLFDDSDERGTVGNVKEDG). Residues 738 to 749 (SQSTDSSFALSS) show a composition bias toward low complexity.

This sequence belongs to the HTATSF1 family. Component of the 17S U2 SnRNP complex, a ribonucleoprotein complex that contains small nuclear RNA (snRNA) U2 and a number of specific proteins. Within the 17S U2 SnRNP complex, interacts (via UHM region) directly with SF3B1. Component of a complex which is at least composed of HTATSF1/Tat-SF1, the P-TEFb complex components CDK9 and CCNT1, RNA polymerase II, SUPT5H, and NCL/nucleolin. Interacts with GTF2F2/RAP30 and POLR2A. Interacts with TCERG1/CA150. Interacts with (poly-ADP-ribosylated) RPA1; promoting HTATSF1 recruitment to DNA damage sites. Interacts (when phosphorylated) with TOPBP1; promoting recruitment of TOPBP1 to DNA damage sites during S-phase. Phosphorylation at Ser-749 by CK2 during S-phase in response to DNA damage promotes interaction with TOPBP1 and double-strand break (DSB) repair via homologous recombination.

The protein localises to the nucleus. Its subcellular location is the chromosome. Functionally, component of the 17S U2 SnRNP complex of the spliceosome, a large ribonucleoprotein complex that removes introns from transcribed pre-mRNAs. The 17S U2 SnRNP complex (1) directly participates in early spliceosome assembly and (2) mediates recognition of the intron branch site during pre-mRNA splicing by promoting the selection of the pre-mRNA branch-site adenosine, the nucleophile for the first step of splicing. Within the 17S U2 SnRNP complex, HTATSF1 is required to stabilize the branchpoint-interacting stem loop. HTATSF1 is displaced from the 17S U2 SnRNP complex before the stable addition of the 17S U2 SnRNP complex to the spliceosome, destabilizing the branchpoint-interacting stem loop and allowing to probe intron branch site sequences. Also acts as a regulator of transcriptional elongation, possibly by mediating the reciprocal stimulatory effect of splicing on transcriptional elongation. Involved in double-strand break (DSB) repair via homologous recombination in S-phase by promoting the recruitment of TOPBP1 to DNA damage sites. Mechanistically, HTATSF1 is (1) recruited to DNA damage sites in S-phase via interaction with poly-ADP-ribosylated RPA1 and (2) phosphorylated by CK2, promoting recruitment of TOPBP1, thereby facilitating RAD51 nucleofilaments formation and RPA displacement, followed by homologous recombination. The protein is 17S U2 SnRNP complex component HTATSF1 (Htatsf1) of Mus musculus (Mouse).